We begin with the raw amino-acid sequence, 279 residues long: Proline-rich protein 23D1 (279 aa).

2 disordered regions span residues 1–60 (MYGY…PHLN) and 247–270 (LRPM…RPPS). Residues 15–33 (TEPQNDNEGETSLATTQMN) show a composition bias toward polar residues.

It belongs to the PRR23 family.

The sequence is that of Proline-rich protein 23D1 (PRR23D1) from Homo sapiens (Human).